Reading from the N-terminus, the 638-residue chain is MILFKQATYFISLFATVSCGCLTQLYENAFFRGGDVASMYTPNAQYCQMRCTFHPRCLLFSFLPASSINDMEKRFGCFLKDSVTGTLPKVHRTGAVSGHSLKQCGHQISACHRDIYKGVDMRGVNFNVSKVSSVEECQKRCTSNIRCQFFSYATQTFHKAEYRNNCLLKYSPGGTPTAIKVLSNVESGFSLKPCALSEIGCHMNIFQHLAFSDVDVARVLTPDAFVCRTICTYHPNCLFFTFYTNVWKIESQRNVCLLKTSESGTPSSSTPQENTISGYSLLTCKRTLPEPCHSKIYPGVDFGGEELNVTFVKGVNVCQETCTKMIRCQFFTYSLLPEDCKEEKCKCFLRLSMDGSPTRIAYGTQGSSGYSLRLCNTGDNSVCTTKTSTRIVGGTNSSWGEWPWQVSLQVKLTAQRHLCGGSLIGHQWVLTAAHCFDGLPLQDVWRIYSGILNLSDITKDTPFSQIKEIIIHQNYKVSEGNHDIALIKLQAPLNYTEFQKPICLPSKGDTSTIYTNCWVTGWGFSKEKGEIQNILQKVNIPLVTNEECQKRYQDYKITQRMVCAGYKEGGKDACKGDSGGPLVCKHNGMWRLVGITSWGEGCARREQPGVYTKVAEYMDWILEKTQSSDGKAQMQSPA.

The first 19 residues, 1-19 (MILFKQATYFISLFATVSC), serve as a signal peptide directing secretion. Apple domains lie at 21–104 (CLTQ…LKQC), 111–194 (CHRD…LKPC), 201–284 (CHMN…LLTC), and 292–375 (CHSK…LRLC). Disulfide bonds link C21–C104, C47–C77, C51–C57, C111–C194, C137–C166, C141–C147, C201–C284, C227–C256, C231–C237, C292–C375, C318–C347, C322–C328, C340–C345, C383–C503, C419–C435, C517–C584, C548–C563, and C574–C602. A glycan (N-linked (GlcNAc...) asparagine) is linked at N127. N-linked (GlcNAc...) asparagine glycosylation is present at N308. The Peptidase S1 domain occupies 391–626 (IVGGTNSSWG…YMDWILEKTQ (236 aa)). An N-linked (GlcNAc...) asparagine glycan is attached at N396. H434 (charge relay system) is an active-site residue. N-linked (GlcNAc...) asparagine glycosylation occurs at N453. D483 serves as the catalytic Charge relay system. N-linked (GlcNAc...) asparagine glycosylation occurs at N494. Catalysis depends on S578, which acts as the Charge relay system.

Belongs to the peptidase S1 family. Plasma kallikrein subfamily. In terms of assembly, forms a heterodimer with SERPINA5. The zymogen is activated by factor XIIa, which cleaves the molecule into a light chain, which contains the active site, and a heavy chain, which associates with HMW kininogen. These chains are linked by one or more disulfide bonds. Interacts with iripin-3, a serine protease inhibitor from Ixodes ricinus saliva. Interacts with iripin-1, a serine protease inhibitor from Ixodes ricinus saliva. As to expression, found in plasma (at protein level).

Its subcellular location is the secreted. The catalysed reaction is Cleaves selectively Arg-|-Xaa and Lys-|-Xaa bonds, including Lys-|-Arg and Arg-|-Ser bonds in (human) kininogen to release bradykinin.. Its activity is regulated as follows. Inhibited by SERPINA5. Functionally, participates in the surface-dependent activation of blood coagulation. Activates, in a reciprocal reaction, coagulation factor XII/F12 after binding to negatively charged surfaces. Releases bradykinin from HMW kininogen and may also play a role in the renin-angiotensin system by converting prorenin into renin. This is Plasma kallikrein (KLKB1) from Homo sapiens (Human).